Consider the following 365-residue polypeptide: Phospho-N-acetylmuramoyl-pentapeptide-transferase (365 aa).

Transmembrane regions (helical) follow at residues 22–42, 74–94, 95–115, 133–153, 168–188, 201–221, 240–260, 267–287, 292–312, and 342–362; these read YISV…LALG, TMGG…WGDL, TSIY…IGFF, YKFA…FYLL, SLYI…IING, GLAI…AYIE, LAEV…FLWF, VFMG…IAVM, LIFF…MLQV, and KVVI…LAAI.

It belongs to the glycosyltransferase 4 family. MraY subfamily. Requires Mg(2+) as cofactor.

Its subcellular location is the cell inner membrane. The enzyme catalyses UDP-N-acetyl-alpha-D-muramoyl-L-alanyl-gamma-D-glutamyl-meso-2,6-diaminopimeloyl-D-alanyl-D-alanine + di-trans,octa-cis-undecaprenyl phosphate = di-trans,octa-cis-undecaprenyl diphospho-N-acetyl-alpha-D-muramoyl-L-alanyl-D-glutamyl-meso-2,6-diaminopimeloyl-D-alanyl-D-alanine + UMP. The protein operates within cell wall biogenesis; peptidoglycan biosynthesis. Its function is as follows. Catalyzes the initial step of the lipid cycle reactions in the biosynthesis of the cell wall peptidoglycan: transfers peptidoglycan precursor phospho-MurNAc-pentapeptide from UDP-MurNAc-pentapeptide onto the lipid carrier undecaprenyl phosphate, yielding undecaprenyl-pyrophosphoryl-MurNAc-pentapeptide, known as lipid I. This Francisella tularensis subsp. tularensis (strain FSC 198) protein is Phospho-N-acetylmuramoyl-pentapeptide-transferase.